A 1197-amino-acid chain; its full sequence is EFRQRDPSPSFRWVKDGKQFGEVLSESGTLTPHPTMDLHFYQGTYRCYAANELGTAVSNLVHLTTEPVPSLAKVKKQKRRAYEVGESAVLRCNPPKSSVTPKIHWMDMQFHHIPLNERVTISRDGNLYFANLIANDSRDDYTCNAHYINASIILPKEPMSIYVTPSNSVVKNRRAKLHHPAGARSSYLVLRGQTLTLQCIPEGLPTPEVHWDRIDSALSPNRTKKLYNNRWLQIDNVLESDDGEYVCTARNSENSVKHHYTVTVEAAPYWTRSPEEHLYAPGETVRLDCKADGIPAPNITWSINGVPVSGTDVDPRRRVSSGKLILSNVEFSDTAVYQCEAVNKHGSILINTHVHVVELPAQILTPDERLYQATAGQTVMLDCRTFGSPLPKIHWEILDSIPALSNAKISQTTNGSLKISNVSEEDSNRYTCSVSETNKSISADVEVLNRTKIVGPPQNLHVIRGSDAILHCKYTVDHNLKSPTVQWNKDGHKITASTSNDKYHEIEGSLKVLDVQMEDMGIYSCEVSTTLDSDTASGYITVQDKPDPPQSLKLSEKMERSVTISWMPSVENNSPVTEYVIEMNEGETPDEGQWQKYRSVSQDIDSWRSICSYSKYHFQIRAVNSIGTSAPTESSLSYSTPAAKPDTNPENVMTLSTDPKSMIISWQEMDRRQFNGPGFQYKVFWRRAADSGAHWTESSVSNPPLMVNNTGTFVSFEIKVQAVNDLGAAPEPLTVIGYSGEDFPLEAPSALSVTELQKTSVMVRWSPVRPESVRGHLLGYKIYLRMKGSQWETPGRAVSSSGNPTVIEVPADAAEKIVSDLQFYSDYTLTITAFNSKGEGPHSEESFSTPEGAPGPVLFLPFDSPSESEITLRWEAPHKPNGEIRGYLLQYQEVVIGSESPQHVESIDLPAVTEFTLKNLNPESRYTFHLSARNDAGDGAPAIQSGATLLDGEPPSVINMTAGETSVNLSWVPGDRHRNLGFSFRYLKKIEGAEWEESEKINSTQAFYQLQGLDSGVIYHLQVLSGNTSYDWDFKTIYSPEWHKSPRNFATEGWFIGLISALVLLLLVLLLLCYIKKSKGGKYSVKDKEEGQGDAANQKLKDDAFGEYRSLESDMEKCSISQPSGCESKRSSNDSLADYGDSVDIQFNEDGSFIGQYSGRRDPRGHDSSGAVSPVNPNMPPPSHSFPTSVTGILGPN.

5 consecutive Ig-like C2-type domains span residues 1–58, 69–160, 165–263, 268–355, and 360–442; these read EFRQ…TAVS, PSLA…EPMS, PSNS…YTVT, PYWT…THVH, and PAQI…KSIS. The Extracellular portion of the chain corresponds to 1–1054; that stretch reads EFRQRDPSPS…SPRNFATEGW (1054 aa). Cys92 and Cys143 are joined by a disulfide. N-linked (GlcNAc...) asparagine glycans are attached at residues Asn135, Asn149, Asn221, Asn298, Asn414, Asn421, Asn438, and Asn449. 3 disulfides stabilise this stretch: Cys199/Cys247, Cys289/Cys339, and Cys383/Cys432. In terms of domain architecture, Ig-like C2-type 6 spans 451 to 541; sequence TKIVGPPQNL…DSDTASGYIT (91 aa). Residues Cys472 and Cys525 are joined by a disulfide bond. 5 consecutive Fibronectin type-III domains span residues 548 to 643, 645 to 742, 747 to 852, 853 to 952, and 953 to 1048; these read PPQS…TPAA, PDTN…SGED, APSA…TPEG, APGP…LLDG, and EPPS…SPRN. The segment covering 630–640 has biased composition (polar residues); that stretch reads APTESSLSYST. The tract at residues 630-655 is disordered; sequence APTESSLSYSTPAAKPDTNPENVMTL. An N-linked (GlcNAc...) asparagine glycan is attached at Asn708. N-linked (GlcNAc...) asparagine glycosylation is found at Asn959, Asn968, Asn1002, and Asn1027. Residues 1055 to 1075 form a helical membrane-spanning segment; sequence FIGLISALVLLLLVLLLLCYI. Residues 1076-1197 lie on the Cytoplasmic side of the membrane; sequence KKSKGGKYSV…TSVTGILGPN (122 aa). Disordered regions lie at residues 1115-1135 and 1154-1197; these read MEKC…SNDS and IGQY…LGPN.

This sequence belongs to the immunoglobulin superfamily. L1/neurofascin/NgCAM family. In terms of tissue distribution, expressed in postmitotic neurons in 16-36 hours embryos, including those in the brain, cranial ganglia and otic and olfactory placodes, and in all classes of spinal neurons.

Its subcellular location is the cell membrane. It is found in the cell projection. It localises to the growth cone. Cell adhesion molecule with an important role in the development of the nervous system. Involved in neuron-neuron adhesion, neurite fasciculation, outgrowth of neurites, etc. Binds to axonin on neurons. The chain is Neural cell adhesion molecule L1.1 (nadl1.1) from Danio rerio (Zebrafish).